Consider the following 326-residue polypeptide: Type II methyltransferase M.EcoRI (326 aa).

Belongs to the N(4)/N(6)-methyltransferase family. In terms of assembly, monomer.

The catalysed reaction is a 2'-deoxyadenosine in DNA + S-adenosyl-L-methionine = an N(6)-methyl-2'-deoxyadenosine in DNA + S-adenosyl-L-homocysteine + H(+). In terms of biological role, a methylase that recognizes the double-stranded sequence 5'-GAATTC-3', methylates A-3 on both strands, and protects the DNA from cleavage by the EcoRI endonuclease. In Escherichia coli, this protein is Type II methyltransferase M.EcoRI (ecoRIM).